The sequence spans 761 residues: Polyribonucleotide nucleotidyltransferase (761 aa).

Asp-532 and Asp-538 together coordinate Mg(2+). One can recognise a KH domain in the interval 598 to 657 (PRVISVQIPVDKIGELIGPKGKTINAIQDETGADISIDEDGTVYIGAVDGPSAEAARAQV). In terms of domain architecture, S1 motif spans 669–741 (GEQFLGTVVK…DRGKLSLAPV (73 aa)).

Belongs to the polyribonucleotide nucleotidyltransferase family. Mg(2+) serves as cofactor.

The protein localises to the cytoplasm. The catalysed reaction is RNA(n+1) + phosphate = RNA(n) + a ribonucleoside 5'-diphosphate. Its function is as follows. Involved in mRNA degradation. Catalyzes the phosphorolysis of single-stranded polyribonucleotides processively in the 3'- to 5'-direction. In Leifsonia xyli subsp. xyli (strain CTCB07), this protein is Polyribonucleotide nucleotidyltransferase.